The primary structure comprises 302 residues: MHVSLRQLRVFEAVARHNSYTRAAEELHLSQPAVSMQVRQLEDEIGLSLFERLGKQVVLTEAGREVFHYSRAIGQSLREMEEVLESLKGVSRGSLRIAVASTVNYFAPRLMAIFQQRHSGIGLRLDVTNRESLVQMLDSNSVDLVLMGVPPRNVEVEAEAFMDNPLVVIAPPDHPLAGERAISLARLAEETFVMREEGSGTRQAMERFFSERGQTIRHGMQMTRNEAVKQAVRSGLGLSVVSLHTIELELETRRLVTLDVEGFPDRRQWYLVYRRGKRLSPAAGAFREFVLSEAARMHCRLG.

One can recognise an HTH lysR-type domain in the interval 1–60 (MHVSLRQLRVFEAVARHNSYTRAAEELHLSQPAVSMQVRQLEDEIGLSLFERLGKQVVLT). The H-T-H motif DNA-binding region spans 20–39 (YTRAAEELHLSQPAVSMQVR).

Belongs to the LysR transcriptional regulatory family.

In terms of biological role, trans-acting transcriptional regulator of RuBisCO genes (rbcAB) expression. The sequence is that of RuBisCO operon transcriptional regulator (rbcR) from Allochromatium vinosum (Chromatium vinosum).